A 176-amino-acid chain; its full sequence is Ribosome maturation factor RimM (176 aa).

Positions 97 to 176 constitute a PRC barrel domain; the sequence is DSEFYHRDLI…QILVDWDPDF (80 aa).

The protein belongs to the RimM family. Binds ribosomal protein uS19.

It is found in the cytoplasm. In terms of biological role, an accessory protein needed during the final step in the assembly of 30S ribosomal subunit, possibly for assembly of the head region. Essential for efficient processing of 16S rRNA. May be needed both before and after RbfA during the maturation of 16S rRNA. It has affinity for free ribosomal 30S subunits but not for 70S ribosomes. The chain is Ribosome maturation factor RimM from Shewanella frigidimarina (strain NCIMB 400).